Here is a 477-residue protein sequence, read N- to C-terminus: UDP-N-acetylglucosamine pyrophosphorylase (477 aa).

The Substrate binding motif lies at 109–112 (MAGG). Residues 109 to 112 (MAGG), Lys-123, and Gln-194 each bind UTP. At Ser-218 the chain carries Phosphoserine. Residue Gly-221 participates in UTP binding. Asn-222 provides a ligand contact to substrate. UTP is bound at residue Asp-252. A Substrate binding motif is present at residues 302–303 (EY). Lys-377 contacts UTP. Residue Lys-409 participates in substrate binding. Residue Ser-461 is modified to Phosphoserine.

Belongs to the UDPGP type 1 family.

It localises to the cytoplasm. The catalysed reaction is N-acetyl-alpha-D-glucosamine 1-phosphate + UTP + H(+) = UDP-N-acetyl-alpha-D-glucosamine + diphosphate. It participates in nucleotide-sugar biosynthesis; UDP-N-acetyl-alpha-D-glucosamine biosynthesis; UDP-N-acetyl-alpha-D-glucosamine from N-acetyl-alpha-D-glucosamine 1-phosphate: step 1/1. In terms of biological role, UDP-N-acetylglucosamine pyrophosphorylase that utilizes N-acetylglucosamine-1-phosphate as substrate. Together with AGM1, is involved in the production of UDP-N-acetylglucosamine from N-acetylglucosamine-6-phosphate. The chain is UDP-N-acetylglucosamine pyrophosphorylase (QRI1) from Saccharomyces cerevisiae (strain ATCC 204508 / S288c) (Baker's yeast).